Here is a 205-residue protein sequence, read N- to C-terminus: uncharacterized protein (205 aa).

This is an uncharacterized protein from Saccharomyces cerevisiae (strain ATCC 204508 / S288c) (Baker's yeast).